Here is a 733-residue protein sequence, read N- to C-terminus: Serine/threonine-protein kinase ATG1c (733 aa).

Residues 12–269 enclose the Protein kinase domain; the sequence is YLVGRQIGSG…FEEFFNHPFL (258 aa). Residues 18 to 26 and K41 each bind ATP; that span reads IGSGSFSVV. D134 serves as the catalytic Proton acceptor. 2 disordered regions span residues 292–363 and 379–414; these read SSGS…ELTS and FETQ…SQDS. Polar residues predominate over residues 329–339; that stretch reads KKTSSMKSSSG. Composition is skewed to basic and acidic residues over residues 342 to 360 and 379 to 393; these read VDTR…KHTE and FETQ…RREP. The AIM (Atg8-family-interacting motif) signature appears at 419–422; sequence FVLV. 2 disordered regions span residues 565 to 596 and 713 to 733; these read GSPS…SHDG and HRRS…NRQS. Polar residues predominate over residues 566–577; that stretch reads SPSQDINKLRSS. The segment covering 579 to 596 has biased composition (basic and acidic residues); sequence LKHDTHSSNKVTDLSHDG. The span at 717–733 shows a compositional bias: polar residues; that stretch reads SAGQMQGSSLAMMNRQS.

Belongs to the protein kinase superfamily. Ser/Thr protein kinase family.

Its subcellular location is the cytoplasmic vesicle. It localises to the autophagosome. Its function is as follows. Serine/threonine protein kinase involved in autophagy. The ATG1-ATG13 protein kinase complex regulates downstream events required for autophagosome enclosure and/or vacuolar delivery. This chain is Serine/threonine-protein kinase ATG1c, found in Arabidopsis thaliana (Mouse-ear cress).